The primary structure comprises 311 residues: Probable manganese-dependent inorganic pyrophosphatase (311 aa).

Positions 9, 13, 15, 77, 99, and 151 each coordinate Mn(2+).

It belongs to the PPase class C family. Mn(2+) serves as cofactor.

It is found in the cytoplasm. The catalysed reaction is diphosphate + H2O = 2 phosphate + H(+). In Streptococcus agalactiae serotype Ia (strain ATCC 27591 / A909 / CDC SS700), this protein is Probable manganese-dependent inorganic pyrophosphatase.